A 2871-amino-acid polypeptide reads, in one-letter code: Fibrillin-1 (2871 aa).

The N-terminal stretch at 1 to 24 is a signal peptide; the sequence is MRRGGLLEVALGFTVLLASYTSHG. A propeptide spanning residues 25–44 is cleaved from the precursor; the sequence is ADTNLEAGNVKETRANRAKR. A fibrillin unique N-terminal (FUN) domain region spans residues 45–81; the sequence is RGGGGHDALKGPNVCGSRYNAYCCPGWKTLPGGNQCI. The tract at residues 45-450 is N-terminal domain; the sequence is RGGGGHDALK…PPRVLPVNVT (406 aa). 11 disulfide bridges follow: C59-C68, C67-C80, C85-C94, C89-C100, C102-C111, C119-C129, C123-C134, C136-C145, C150-C160, C154-C166, and C168-C177. EGF-like domains lie at 81–112, 115–146, and 147–178; these read IVPI…PSCG, SIQH…THCG, and QPVC…PQCE. Residues 119–329 are interaction with MFAP4; the sequence is CNIRCMNGGS…YTSPDGTRCI (211 aa). A TB 1 domain is found at 184-236; sequence GPCFTVISNQMCQGQLSGIVCTKTLCCATVGRAWGHPCEMCPAQPHPCRRGFI. Residues 195 to 221 form a hybrid domain 1 region; sequence CQGQLSGIVCTKTLCCATVGRAWGHPC. In terms of domain architecture, EGF-like 4; calcium-binding spans 246–287; sequence DVDECQAIPGLCQGGNCINTVGSFECKCPAGHKFNEVSQKCE. Cystine bridges form between C250-C262, C257-C271, C273-C286, C292-C304, C299-C313, and C315-C328. S268 carries O-linked (Glc) serine glycosylation. Residues 288–329 enclose the EGF-like 5; calcium-binding domain; the sequence is DIDECSTIPGICDGGECTNTVSSYFCKCPPGFYTSPDGTRCI. A TB 2 domain is found at 334-389; that stretch reads GYCYTALANGRCSNQLPQSITKMQCCCDVGRCWSPGVTVAPEMCPIRATEDFNKLC. N-linked (GlcNAc...) asparagine glycosylation is present at N448. Residues 449–489 enclose the EGF-like 6 domain; sequence VTDYCQLFRYLCQNGRCIPTPGSYRCECNKGFQLDLRGECI. 15 disulfide bridges follow: C453–C465, C460–C474, C476–C488, C494–C504, C499–C513, C515–C528, C534–C546, C541–C555, C557–C570, C576–C587, C582–C596, C598–C611, C617–C628, C623–C637, and C639–C652. Residue S471 is glycosylated (O-linked (Glc) serine). The region spanning 490–529 is the EGF-like 7; calcium-binding domain; it reads DVDECEKNPCAGGECINTQGSYTCQCRPGYQSTLTRTECR. S510 is a glycosylation site (O-linked (Glc) serine). One can recognise an EGF-like 8; calcium-binding domain in the interval 530-571; the sequence is DIDECLQNGRICNNGRCINTDGSFHCVCNAGFHVTRDGKNCE. The EGF-like 9; calcium-binding domain occupies 572–612; sequence DMDECSIRNMCLNGMCINEDGSFKCICKPGFQLASDGRYCK. Residues 613–653 form the EGF-like 10; calcium-binding domain; the sequence is DINECETPGICMNGRCVNTDGSYRCECFPGLAVGLDGRVCV. The region spanning 659–711 is the TB 3 domain; the sequence is STCYGGYKRGQCVKPLFGAVTKSECCCASTEYAFGEPCQPCPSQNSAEYQALC. One can recognise an EGF-like 11; calcium-binding domain in the interval 723–764; sequence DINECALDPDICPNGICENLRGTYKCICNSGYEVDSTGKNCV. Cystine bridges form between C727/C739, C734/C748, C750/C763, C769/C781, C776/C790, C792/C805, C811/C821, C816/C830, C832/C845, C853/C875, C862/C887, C876/C890, C896/C908, C914/C926, C921/C935, and C937/C950. The EGF-like 12; calcium-binding domain occupies 765-806; it reads DINECVLNSLLCDNGQCRNTPGSFVCTCPKGFIYKPELKTCE. Residues 807–846 enclose the EGF-like 13; calcium-binding domain; it reads DIDECESSPCINGVCKNSPGSFICECSSESTLDPTKTICI. A TB 4 domain is found at 851 to 902; that stretch reads GTCWQTVIDGRCEININGATLKSQCCSSLGAAWGSPCTPCQVDPICGKGYSR. Residues 862-887 are hybrid domain 2; it reads CEININGATLKSQCCSSLGAAWGSPC. An EGF-like 14; calcium-binding domain is found at 910–951; that stretch reads DIDECEVFPGVCKNGLCVNSKGSFKCQCPSGMTLDATGRICL. Residues 956-1008 form the TB 5 domain; sequence ETCFLRYEDEECTLPVAGRHRMDACCCSVGAAWGTEECEECPVRNTPEYEELC. The region spanning 1028–1069 is the EGF-like 15; calcium-binding domain; sequence DINECKMIPNLCTHGKCRNTIGSFKCRCDSGFALDSEERNCT. Disulfide bonds link C1032-C1044, C1039-C1053, C1055-C1068, C1074-C1086, C1081-C1095, C1097-C1111, C1117-C1129, C1124-C1138, C1140-C1153, C1159-C1171, C1166-C1180, C1182-C1195, C1201-C1212, C1208-C1221, C1223-C1236, C1242-C1254, C1249-C1263, C1265-C1278, C1284-C1296, C1291-C1305, C1307-C1320, C1326-C1339, C1333-C1348, C1350-C1361, C1367-C1380, C1374-C1389, C1391-C1402, C1408-C1420, C1415-C1429, C1431-C1444, C1450-C1461, C1456-C1470, C1472-C1485, C1491-C1502, C1497-C1511, C1513-C1526, C1534-C1562, C1549-C1574, C1563-C1577, C1564-C1589, C1610-C1622, C1617-C1631, C1633-C1646, C1652-C1663, C1658-C1672, and C1674-C1687. N1067 is a glycosylation site (N-linked (GlcNAc...) asparagine). The region spanning 1070-1112 is the EGF-like 16; calcium-binding domain; the sequence is DIDECRISPDLCGRGQCVNTPGDFECKCDEGYESGFMMMKNCM. The 42-residue stretch at 1113-1154 folds into the EGF-like 17; calcium-binding domain; it reads DIDECQRDPLLCRGGVCLNTEGSYRCECPPGHQLAPNISACI. Residue S1135 is glycosylated (O-linked (Glc) serine). N1149 is a glycosylation site (N-linked (GlcNAc...) asparagine). An EGF-like 18; calcium-binding domain is found at 1155 to 1196; that stretch reads DINECELSAHLCPHGRCVNLIGKYQCACNPGYHSTPDRLFCV. The region spanning 1197 to 1237 is the EGF-like 19; calcium-binding domain; it reads DIDECSIMNGGCETFCTNSEGSYECSCQPGFALMPDQRSCT. S1218 is a glycosylation site (O-linked (Glc) serine). An EGF-like 20; calcium-binding domain is found at 1238–1279; sequence DIDECEDNPNICDGGQCTNIPGEYRCLCYDGFMASEDMKTCV. Residues 1280-1321 enclose the EGF-like 21; calcium-binding domain; sequence DVNECDLNPNICLSGTCENTKGSFICHCDMGYSGKKGKTGCT. Residue S1302 is glycosylated (O-linked (Glc) serine). The region spanning 1322 to 1362 is the EGF-like 22; calcium-binding domain; that stretch reads DINECEIGAHNCDRHAVCTNTAGSFKCSCSPGWIGDGIKCT. S1345 carries O-linked (Glc) serine glycosylation. Positions 1363 to 1403 constitute an EGF-like 23; calcium-binding domain; that stretch reads DLDECSNGTHMCSQHADCKNTMGSYRCLCKEGYTGDGFTCT. N-linked (GlcNAc...) asparagine glycosylation occurs at N1369. An O-linked (Glc) serine glycan is attached at S1386. The EGF-like 24; calcium-binding domain occupies 1404-1445; it reads DLDECSENLNLCGNGQCLNAPGGYRCECDMGFVPSADGKACE. Residues 1446–1486 enclose the EGF-like 25; calcium-binding domain; the sequence is DIDECSLPNICVFGTCHNLPGLFRCECEIGYELDRSGGNCT. The N-linked (GlcNAc...) asparagine glycan is linked to N1484. The region spanning 1487 to 1527 is the EGF-like 26; calcium-binding domain; the sequence is DVNECLDPTTCISGNCVNTPGSYTCDCPPDFELNPTRVGCV. S1508 is a glycosylation site (O-linked (Glc) serine). The interval 1528–2731 is C-terminal domain; it reads DTRSGNCYLD…GYPKRGRKRR (1204 aa). Positions 1532 to 1589 constitute a TB 6 domain; it reads GNCYLDIRPRGDNGDTACSNEIGVGVSKASCCCSLGKAWGTPCELCPPVNTSEYKILC. The Cell attachment site motif lies at 1541–1543; sequence RGD. The N-linked (GlcNAc...) asparagine glycan is linked to N1581. Residues 1606-1647 enclose the EGF-like 27; calcium-binding domain; the sequence is DIDECQELPGLCQGGKCINTFGSFQCRCPTGYYLNEDTRVCD. S1628 is a glycosylation site (O-linked (Glc) serine). Residues 1648 to 1688 form the EGF-like 28; calcium-binding domain; it reads DVNECETPGICGPGTCYNTVGNYTCICPPDYMQVNGGNNCM. N-linked (GlcNAc...) asparagine glycosylation occurs at N1669. One can recognise a TB 7 domain in the interval 1693-1748; the sequence is SLCYRNYYADNQTCDGELLFNMTKKMCCCSYNIGRAWNKPCEQCPIPSTDEFATLC. 2 N-linked (GlcNAc...) asparagine glycosylation sites follow: N1703 and N1713. In terms of domain architecture, EGF-like 29; calcium-binding spans 1766 to 1807; the sequence is DIDECREIPGVCENGVCINMVGSFRCECPVGFFYNDKLLVCE. Disulfide bonds link C1770-C1782, C1777-C1791, C1793-C1806, C1812-C1824, C1818-C1833, C1835-C1847, C1853-C1865, C1860-C1874, C1876-C1889, C1895-C1905, C1900-C1914, C1916-C1928, C1934-C1947, C1942-C1956, C1958-C1971, C1977-C1989, C1984-C1998, C2000-C2011, C2017-C2029, C2024-C2038, C2040-C2053, C2061-C2083, C2070-C2096, C2084-C2099, C2085-C2111, C2131-C2142, C2137-C2151, C2153-C2164, C2170-C2181, C2176-C2190, C2192-C2204, C2210-C2221, C2217-C2230, C2232-C2245, C2251-C2265, C2258-C2274, C2276-C2289, C2295-C2307, C2302-C2316, and C2318-C2331. Positions 1808–1848 constitute an EGF-like 30; calcium-binding domain; the sequence is DIDECQNGPVCQRNAECINTAGSYRCDCKPGYRFTSTGQCN. The O-linked (Glc) serine glycan is linked to S1830. Residues 1849–1890 enclose the EGF-like 31; calcium-binding domain; the sequence is DRNECQEIPNICSHGQCIDTVGSFYCLCHTGFKTNADQTMCL. O-linked (Glc) serine glycosylation occurs at S1871. One can recognise an EGF-like 32; calcium-binding domain in the interval 1891–1929; the sequence is DINECERDACGNGTCRNTIGSFNCRCNHGFILSHNNDCI. N-linked (GlcNAc...) asparagine glycosylation occurs at N1902. O-linked (Glc) serine glycosylation occurs at S1911. In terms of domain architecture, EGF-like 33; calcium-binding spans 1930-1972; sequence DVDECATGNGNLCRNGQCINTVGSFQCQCNEGYEVAPDGRTCV. Residue S1953 is glycosylated (O-linked (Glc) serine). An EGF-like 34; calcium-binding domain is found at 1973 to 2012; sequence DINECLLDPRKCAPGTCQNLDGSYRCICPPGYSLQNDKCE. The 42-residue stretch at 2013-2054 folds into the EGF-like 35; calcium-binding domain; it reads DIDECVEEPEICALGTCSNTEGSFKCLCPDGFSLSSTGRRCQ. O-linked (Glc) serine glycosylation occurs at S2035. The region spanning 2059–2111 is the TB 8 domain; that stretch reads SYCYAKFEGGKCSSPKSRNHSKQECCCALKGEGWGDPCELCPTEPDEAFRQIC. N2077 carries N-linked (GlcNAc...) asparagine glycosylation. In terms of domain architecture, EGF-like 36; calcium-binding spans 2127–2165; that stretch reads DMDECKEPDVCKHGQCINTDGSYRCECPFGYILQGNECV. An O-linked (Glc) serine glycan is attached at S2148. One can recognise an EGF-like 37; calcium-binding domain in the interval 2166–2205; sequence DTDECSVGNPCGNGTCKNVIGGFECTCEEGFEPGPMMTCE. N2178 is a glycosylation site (N-linked (GlcNAc...) asparagine). One can recognise an EGF-like 38; calcium-binding domain in the interval 2206-2246; it reads DINECAQNPLLCAFRCVNTYGSYECKCPAGYVLREDRRMCK. O-linked (Glc) serine glycosylation is present at S2227. The EGF-like 39; calcium-binding domain maps to 2247–2290; the sequence is DEDECEEGKHDCAEKQMECKNLIGTYLCICGPGYQRRPDGEGCV. An EGF-like 40; calcium-binding domain is found at 2291-2332; that stretch reads DENECQTKPGICENGRCLNTRGSYTCECNDGFTASPNQDECL. O-linked (Glc) serine glycosylation is present at S2313. The TB 9 domain maps to 2337 to 2390; sequence GYCFTEVLQNMCQIGSSNRNPVTKSECCCDGGRGWGPHCEICPFQGTVAFKKLC. In terms of domain architecture, EGF-like 41; calcium-binding spans 2402–2443; sequence DIDECKVIHDVCRNGECVNDRGSYHCICKTGYTPDITGTACV. 21 disulfides stabilise this stretch: C2406–C2418, C2413–C2427, C2429–C2442, C2448–C2459, C2455–C2468, C2470–C2483, C2489–C2500, C2496–C2509, C2511–C2522, C2528–C2541, C2535–C2550, C2552–C2565, C2571–C2581, C2577–C2590, C2592–C2605, C2611–C2622, C2617–C2631, C2633–C2646, C2652–C2663, C2659–C2672, and C2674–C2686. In terms of domain architecture, EGF-like 42; calcium-binding spans 2444-2484; sequence DLNECNQAPKPCNFICKNTEGSYQCSCPKGYILQEDGRSCK. S2465 is a glycosylation site (O-linked (Glc) serine). Residues 2485–2523 enclose the EGF-like 43; calcium-binding domain; the sequence is DLDECATKQHNCQFLCVNTIGSFTCKCPPGFTQHHTACI. Residues 2524–2566 form the EGF-like 44; calcium-binding domain; the sequence is DNNECTSDINLCGSKGICQNTPGSFTCECQRGFSLDPSGASCE. Residue S2547 is glycosylated (O-linked (Glc) serine). The region spanning 2567 to 2606 is the EGF-like 45; calcium-binding domain; that stretch reads DVDECEGNHRCQHGCQNIIGGYRCSCPQGYLQHYQWNQCV. The EGF-like 46; calcium-binding domain maps to 2607–2647; that stretch reads DENECLSAHICGGASCHNTLGSYKCMCPAGFQYEQFSGGCQ. S2628 carries an O-linked (Glc) serine glycan. One can recognise an EGF-like 47; calcium-binding domain in the interval 2648-2687; it reads DINECGSAQAPCSYGCSNTEGGYLCACPPGYFRIGQGHCV. 2 positions are modified to phosphoserine: S2702 and S2709. 3 N-linked (GlcNAc...) asparagine glycosylation sites follow: N2734, N2750, and N2767.

This sequence belongs to the fibrillin family. Interacts with COL16A1. Interacts with integrin alpha-V/beta-3. Interacts with ADAMTS10; this interaction promotes microfibril assembly. Interacts with THSD4; this interaction promotes fibril formation. Interacts (via N-terminal domain) with FBLN2 and FBLN5. Interacts with ELN. Forms a ternary complex with ELN and FBLN2 or FBLN5 and a significant interaction with ELN seen only in the presence of FBLN2 or FBLN5. Interacts (via N-terminal domain) with LTBP2 (via C-terminal domain) in a Ca(+2)-dependent manner. Interacts (via N-terminal domain) with LTBP1 (via C-terminal domain). Interacts with integrins ITGA5:ITGB1, ITGAV:ITGB3 and ITGAV:ITGB6. Interacts (via N-terminal domain) with BMP2, BMP4, BMP7, BMP10 and GDF5. Interacts (via N-terminal domain) with MFAP2 and MFAP5. Interacts with ADAMTSL5. Interacts with MFAP4. Interacts (via N-terminal domain) with TNFSF11 in a Ca(+2)-dependent manner. Interacts (via N-terminal domain) with EFEMP2; this interaction inhibits EFEMP2 binding to LOX and ELN. Cleavage of N- and C-terminus by furin is required for incorporation into the extracellular matrix and assembly into microfibrils. The C-terminus, which corresponds to the Asprosin chain, was initially thought to constitute a propeptide. Fibrillin-1 and Asprosin chains are still linked together during the secretion from cells, but are subsequently separated by furin, an essential step for incorporation of Fibrillin-1 into the nascent microfibrils. In terms of processing, forms intermolecular disulfide bonds either with other fibrillin-1 molecules or with other components of the microfibrils. Post-translationally, O-glycosylated on serine residues by POGLUT2 and POGLUT3 which is necessary for efficient protein secretion.

The protein localises to the secreted. Its subcellular location is the extracellular space. The protein resides in the extracellular matrix. Its function is as follows. Structural component of the 10-12 nm diameter microfibrils of the extracellular matrix, which conveys both structural and regulatory properties to load-bearing connective tissues. Fibrillin-1-containing microfibrils provide long-term force bearing structural support. In tissues such as the lung, blood vessels and skin, microfibrils form the periphery of the elastic fiber, acting as a scaffold for the deposition of elastin. In addition, microfibrils can occur as elastin-independent networks in tissues such as the ciliary zonule, tendon, cornea and glomerulus where they provide tensile strength and have anchoring roles. Fibrillin-1 also plays a key role in tissue homeostasis through specific interactions with growth factors, such as the bone morphogenetic proteins (BMPs), growth and differentiation factors (GDFs) and latent transforming growth factor-beta-binding proteins (LTBPs), cell-surface integrins and other extracellular matrix protein and proteoglycan components. Regulates osteoblast maturation by controlling TGF-beta bioavailability and calibrating TGF-beta and BMP levels, respectively. Negatively regulates osteoclastogenesis by binding and sequestering an osteoclast differentiation and activation factor TNFSF11. This leads to disruption of TNFSF11-induced Ca(2+) signaling and impairment of TNFSF11-mediated nuclear translocation and activation of transcription factor NFATC1 which regulates genes important for osteoclast differentiation and function. Mediates cell adhesion via its binding to cell surface receptors integrins ITGAV:ITGB3 and ITGA5:ITGB1. Binds heparin and this interaction plays an important role in the assembly of microfibrils. Hormone that targets the liver to increase plasma glucose levels. Secreted by white adipose tissue and circulates in the plasma. Acts in response to fasting and promotes blood glucose elevation by binding to the surface of hepatocytes. Promotes hepatocyte glucose release by activating the protein kinase A activity in the liver, resulting in rapid glucose release into the circulation. The polypeptide is Fibrillin-1 (Bos taurus (Bovine)).